The following is a 934-amino-acid chain: Pesticidal crystal protein Cry1Aa (934 aa).

The protein belongs to the delta endotoxin family.

In terms of biological role, promotes colloidosmotic lysis by binding to the midgut epithelial cells of many lepidopteran larvae. The polypeptide is Pesticidal crystal protein Cry1Aa (cry1Aa) (Bacillus thuringiensis subsp. sotto).